A 216-amino-acid polypeptide reads, in one-letter code: Imidazole glycerol phosphate synthase subunit HisH (216 aa).

Residues 2–216 (SVAIVDYGSG…LISNFLKWKP (215 aa)) form the Glutamine amidotransferase type-1 domain. Residue Cys-88 is the Nucleophile of the active site. Catalysis depends on residues His-196 and Glu-198.

As to quaternary structure, heterodimer of HisH and HisF.

Its subcellular location is the cytoplasm. The catalysed reaction is 5-[(5-phospho-1-deoxy-D-ribulos-1-ylimino)methylamino]-1-(5-phospho-beta-D-ribosyl)imidazole-4-carboxamide + L-glutamine = D-erythro-1-(imidazol-4-yl)glycerol 3-phosphate + 5-amino-1-(5-phospho-beta-D-ribosyl)imidazole-4-carboxamide + L-glutamate + H(+). It carries out the reaction L-glutamine + H2O = L-glutamate + NH4(+). It functions in the pathway amino-acid biosynthesis; L-histidine biosynthesis; L-histidine from 5-phospho-alpha-D-ribose 1-diphosphate: step 5/9. Its function is as follows. IGPS catalyzes the conversion of PRFAR and glutamine to IGP, AICAR and glutamate. The HisH subunit catalyzes the hydrolysis of glutamine to glutamate and ammonia as part of the synthesis of IGP and AICAR. The resulting ammonia molecule is channeled to the active site of HisF. The chain is Imidazole glycerol phosphate synthase subunit HisH from Rhodopseudomonas palustris (strain ATCC BAA-98 / CGA009).